Here is a 362-residue protein sequence, read N- to C-terminus: Peptide chain release factor 1 (362 aa).

Glutamine 237 bears the N5-methylglutamine mark.

It belongs to the prokaryotic/mitochondrial release factor family. Post-translationally, methylated by PrmC. Methylation increases the termination efficiency of RF1.

Its subcellular location is the cytoplasm. In terms of biological role, peptide chain release factor 1 directs the termination of translation in response to the peptide chain termination codons UAG and UAA. This is Peptide chain release factor 1 from Vibrio atlanticus (strain LGP32) (Vibrio splendidus (strain Mel32)).